Here is a 67-residue protein sequence, read N- to C-terminus: Protein AaeX (67 aa).

Transmembrane regions (helical) follow at residues 10 to 30 (FGLS…LFFV) and 43 to 63 (FVWH…YLLF).

Belongs to the AaeX family.

It is found in the cell membrane. This chain is Protein AaeX, found in Pectobacterium atrosepticum (strain SCRI 1043 / ATCC BAA-672) (Erwinia carotovora subsp. atroseptica).